The chain runs to 20 residues: 39 kDa major outer membrane protein (20 aa).

Its subcellular location is the cell outer membrane. This Aggregatibacter actinomycetemcomitans (Actinobacillus actinomycetemcomitans) protein is 39 kDa major outer membrane protein.